Consider the following 266-residue polypeptide: Probable septum site-determining protein MinC (266 aa).

A compositionally biased stretch (low complexity) spans 1 to 21 (MSEAESTPVEEPVVESTEGSE). Positions 1-28 (MSEAESTPVEEPVVESTEGSEAIPEVEQ) are disordered.

Belongs to the MinC family. As to quaternary structure, interacts with MinD and FtsZ.

In terms of biological role, cell division inhibitor that blocks the formation of polar Z ring septums. Rapidly oscillates between the poles of the cell to destabilize FtsZ filaments that have formed before they mature into polar Z rings. Prevents FtsZ polymerization. The protein is Probable septum site-determining protein MinC of Thermosynechococcus vestitus (strain NIES-2133 / IAM M-273 / BP-1).